Reading from the N-terminus, the 144-residue chain is Protein CT_635 (144 aa).

The interval 110–144 (EVTNDIGHSSHKSPTPKKTKSSSQKKSKKKNWIPL) is disordered. The segment covering 118–144 (SSHKSPTPKKTKSSSQKKSKKKNWIPL) has biased composition (basic residues).

This sequence belongs to the chlamydial CPn_0742/CT_635/TC_0003 family.

The polypeptide is Protein CT_635 (Chlamydia trachomatis serovar D (strain ATCC VR-885 / DSM 19411 / UW-3/Cx)).